The primary structure comprises 155 residues: DNA polymerase epsilon subunit 4 (155 aa).

Acidic residues-rich tracts occupy residues M1–D16 and E24–E48. The segment at M1–T76 is disordered. Residues A49–N65 are compositionally biased toward polar residues.

Component of the DNA polymerase epsilon complex consisting of four subunits: the catalytic subunit PolE1/DNApol-epsilon255 and the accessory subunits PolE2/DNApol-epsilon58, Chrac-14/DNApolE3 and PolE4/Mes4.

The protein resides in the nucleus. In terms of biological role, accessory component of the DNA polymerase epsilon complex. Participates in DNA repair and in chromosomal DNA replication. Has a role in cell cycle progression. Required for wing morphogenesis. The polypeptide is DNA polymerase epsilon subunit 4 (Drosophila melanogaster (Fruit fly)).